Consider the following 219-residue polypeptide: Translation initiation factor 6 (219 aa).

It belongs to the eIF-6 family.

Functionally, binds to the 50S ribosomal subunit and prevents its association with the 30S ribosomal subunit to form the 70S initiation complex. This chain is Translation initiation factor 6, found in Methanosarcina mazei (strain ATCC BAA-159 / DSM 3647 / Goe1 / Go1 / JCM 11833 / OCM 88) (Methanosarcina frisia).